The sequence spans 262 residues: Ribosomal RNA small subunit methyltransferase A (262 aa).

6 residues coordinate S-adenosyl-L-methionine: His-19, Leu-21, Gly-44, Glu-65, Asp-90, and Asn-109. The interval 218 to 246 (LPNNLPGPLRERAEEALAGLGHGPDARAE) is disordered.

It belongs to the class I-like SAM-binding methyltransferase superfamily. rRNA adenine N(6)-methyltransferase family. RsmA subfamily.

It is found in the cytoplasm. It catalyses the reaction adenosine(1518)/adenosine(1519) in 16S rRNA + 4 S-adenosyl-L-methionine = N(6)-dimethyladenosine(1518)/N(6)-dimethyladenosine(1519) in 16S rRNA + 4 S-adenosyl-L-homocysteine + 4 H(+). Functionally, specifically dimethylates two adjacent adenosines (A1518 and A1519) in the loop of a conserved hairpin near the 3'-end of 16S rRNA in the 30S particle. May play a critical role in biogenesis of 30S subunits. The protein is Ribosomal RNA small subunit methyltransferase A of Rubrobacter xylanophilus (strain DSM 9941 / JCM 11954 / NBRC 16129 / PRD-1).